Reading from the N-terminus, the 366-residue chain is Aliphatic nitrilase (366 aa).

The CN hydrolase domain occupies 8–282; sequence FKVAAVQAQP…EGILYADIDL (275 aa). E48 acts as the Proton acceptor in catalysis. The Proton donor role is filled by K131. The active-site Nucleophile is the C165. The segment at 346–366 is disordered; it reads DEQRALPSTHSDETDRATASI. Basic and acidic residues predominate over residues 355–366; sequence HSDETDRATASI.

Belongs to the carbon-nitrogen hydrolase superfamily. Nitrilase family. In terms of assembly, homodimer.

The catalysed reaction is an aliphatic nitrile + 2 H2O = a carboxylate + NH4(+). The chain is Aliphatic nitrilase (nitA) from Rhodococcus rhodochrous.